Here is a 253-residue protein sequence, read N- to C-terminus: Sporulation initiation inhibitor protein Soj (253 aa).

Residues Lys-11, Gly-12, Gly-13, Val-14, Gly-15, Lys-16, Thr-17, Thr-18, Pro-214, and Asn-216 each coordinate ATP. Thr-17 serves as a coordination point for Mg(2+).

This sequence belongs to the ParA family. In terms of assembly, dimerizes in the presence of ATP but not ADP; ATP-binding is required for double-stranded (ds)DNA-binding. Interacts with DnaA.

It is found in the cytoplasm. The enzyme catalyses ATP + H2O = ADP + phosphate + H(+). Acts as a spatially regulated molecular switch, capable of either inhibiting or activating the ability of DnaA to initiate DNA replication. Monomeric ADP-Soj inhibits oligomerization of DnaA on single-stranded (ss)- or double-stranded (ds)DNA, thus inhibiting DNA replication initiation; does not disassemble premade DnaA-DNA filaments. Decreases the residence time of DnaA on the chromosome at its binding sites (oriC, replication forks and (probably) promoter-binding sites). Soj forms nucleoprotein filaments in an ATP- and DNA-dependent manner. Inhibits the initiation of sporulation, Spo0J antagonizes this inhibition. Soj ultimately inhibits the activation (phosphorylation) of Spo0A. The sequence is that of Sporulation initiation inhibitor protein Soj from Bacillus subtilis (strain 168).